A 629-amino-acid chain; its full sequence is tRNA uridine 5-carboxymethylaminomethyl modification enzyme MnmG (629 aa).

FAD contacts are provided by residues 13 to 18 (GGGHAG), Val125, and Ser180. An NAD(+)-binding site is contributed by 273–287 (GPRYCPSIEDKVMRF). FAD is bound at residue Gln370.

It belongs to the MnmG family. As to quaternary structure, homodimer. Heterotetramer of two MnmE and two MnmG subunits. It depends on FAD as a cofactor.

Its subcellular location is the cytoplasm. Functionally, NAD-binding protein involved in the addition of a carboxymethylaminomethyl (cmnm) group at the wobble position (U34) of certain tRNAs, forming tRNA-cmnm(5)s(2)U34. This Serratia proteamaculans (strain 568) protein is tRNA uridine 5-carboxymethylaminomethyl modification enzyme MnmG.